The sequence spans 306 residues: Pantothenate kinase (306 aa).

90–97 (GSVAVGKS) contacts ATP.

The protein belongs to the prokaryotic pantothenate kinase family.

It localises to the cytoplasm. It carries out the reaction (R)-pantothenate + ATP = (R)-4'-phosphopantothenate + ADP + H(+). The protein operates within cofactor biosynthesis; coenzyme A biosynthesis; CoA from (R)-pantothenate: step 1/5. This Listeria welshimeri serovar 6b (strain ATCC 35897 / DSM 20650 / CCUG 15529 / CIP 8149 / NCTC 11857 / SLCC 5334 / V8) protein is Pantothenate kinase.